We begin with the raw amino-acid sequence, 158 residues long: 6,7-dimethyl-8-ribityllumazine synthase (158 aa).

5-amino-6-(D-ribitylamino)uracil-binding positions include Phe22, Ala57–Glu59, and Ala81–Ile83. Gly86–Thr87 contributes to the (2S)-2-hydroxy-3-oxobutyl phosphate binding site. The active-site Proton donor is the His89. Phe114 contacts 5-amino-6-(D-ribitylamino)uracil. Arg128 is a (2S)-2-hydroxy-3-oxobutyl phosphate binding site.

The protein belongs to the DMRL synthase family. Forms an icosahedral capsid composed of 60 subunits, arranged as a dodecamer of pentamers.

The enzyme catalyses (2S)-2-hydroxy-3-oxobutyl phosphate + 5-amino-6-(D-ribitylamino)uracil = 6,7-dimethyl-8-(1-D-ribityl)lumazine + phosphate + 2 H2O + H(+). The protein operates within cofactor biosynthesis; riboflavin biosynthesis; riboflavin from 2-hydroxy-3-oxobutyl phosphate and 5-amino-6-(D-ribitylamino)uracil: step 1/2. Its function is as follows. Catalyzes the formation of 6,7-dimethyl-8-ribityllumazine by condensation of 5-amino-6-(D-ribitylamino)uracil with 3,4-dihydroxy-2-butanone 4-phosphate. This is the penultimate step in the biosynthesis of riboflavin. This Shewanella piezotolerans (strain WP3 / JCM 13877) protein is 6,7-dimethyl-8-ribityllumazine synthase.